Reading from the N-terminus, the 128-residue chain is Glycine cleavage system H protein (128 aa).

Residues 25–107 (TVRVGITDFA…YEGGWLFEIT (83 aa)) enclose the Lipoyl-binding domain. K66 carries the post-translational modification N6-lipoyllysine.

It belongs to the GcvH family. In terms of assembly, the glycine cleavage system is composed of four proteins: P, T, L and H. (R)-lipoate is required as a cofactor.

The glycine cleavage system catalyzes the degradation of glycine. The H protein shuttles the methylamine group of glycine from the P protein to the T protein. The polypeptide is Glycine cleavage system H protein (Micrococcus luteus (strain ATCC 4698 / DSM 20030 / JCM 1464 / CCM 169 / CCUG 5858 / IAM 1056 / NBRC 3333 / NCIMB 9278 / NCTC 2665 / VKM Ac-2230) (Micrococcus lysodeikticus)).